The following is a 544-amino-acid chain: Chaperonin GroEL (544 aa).

Residues 29-32 (TLGP), 86-90 (DGTTT), glycine 413, 476-478 (NAL), and aspartate 492 contribute to the ATP site.

It belongs to the chaperonin (HSP60) family. As to quaternary structure, forms a cylinder of 14 subunits composed of two heptameric rings stacked back-to-back. Interacts with the co-chaperonin GroES.

It localises to the cytoplasm. It carries out the reaction ATP + H2O + a folded polypeptide = ADP + phosphate + an unfolded polypeptide.. Together with its co-chaperonin GroES, plays an essential role in assisting protein folding. The GroEL-GroES system forms a nano-cage that allows encapsulation of the non-native substrate proteins and provides a physical environment optimized to promote and accelerate protein folding. In Desulfitobacterium hafniense (strain DSM 10664 / DCB-2), this protein is Chaperonin GroEL.